Consider the following 87-residue polypeptide: Small ribosomal subunit protein bS20 (87 aa).

Residues 1–26 are disordered; sequence MANIKSAKKRAVQSEKARKHNASRRS.

The protein belongs to the bacterial ribosomal protein bS20 family.

Its function is as follows. Binds directly to 16S ribosomal RNA. The chain is Small ribosomal subunit protein bS20 from Klebsiella pneumoniae (strain 342).